We begin with the raw amino-acid sequence, 641 residues long: 1-deoxy-D-xylulose-5-phosphate synthase (641 aa).

Residues His-71 and 112-114 (SHA) contribute to the thiamine diphosphate site. Asp-144 contacts Mg(2+). Thiamine diphosphate contacts are provided by residues 145-146 (GA), Asn-173, Tyr-284, and Glu-365. Asn-173 contacts Mg(2+).

Belongs to the transketolase family. DXPS subfamily. As to quaternary structure, homodimer. Requires Mg(2+) as cofactor. Thiamine diphosphate is required as a cofactor.

It catalyses the reaction D-glyceraldehyde 3-phosphate + pyruvate + H(+) = 1-deoxy-D-xylulose 5-phosphate + CO2. Its pathway is metabolic intermediate biosynthesis; 1-deoxy-D-xylulose 5-phosphate biosynthesis; 1-deoxy-D-xylulose 5-phosphate from D-glyceraldehyde 3-phosphate and pyruvate: step 1/1. Its function is as follows. Catalyzes the acyloin condensation reaction between C atoms 2 and 3 of pyruvate and glyceraldehyde 3-phosphate to yield 1-deoxy-D-xylulose-5-phosphate (DXP). The protein is 1-deoxy-D-xylulose-5-phosphate synthase of Mycolicibacterium paratuberculosis (strain ATCC BAA-968 / K-10) (Mycobacterium paratuberculosis).